Consider the following 393-residue polypeptide: Formate-dependent phosphoribosylglycinamide formyltransferase (393 aa).

N(1)-(5-phospho-beta-D-ribosyl)glycinamide contacts are provided by residues 22 to 23 (EL) and E82. Residues R114, K155, 160-165 (SSGKGQ), 195-198 (EGFV), and E203 contribute to the ATP site. The ATP-grasp domain maps to 119-308 (RLAAEELGLP…EFALHVRAIL (190 aa)). Mg(2+)-binding residues include E267 and E279. Residues D286, K356, and 363-364 (RR) each bind N(1)-(5-phospho-beta-D-ribosyl)glycinamide.

It belongs to the PurK/PurT family. As to quaternary structure, homodimer.

It carries out the reaction N(1)-(5-phospho-beta-D-ribosyl)glycinamide + formate + ATP = N(2)-formyl-N(1)-(5-phospho-beta-D-ribosyl)glycinamide + ADP + phosphate + H(+). It participates in purine metabolism; IMP biosynthesis via de novo pathway; N(2)-formyl-N(1)-(5-phospho-D-ribosyl)glycinamide from N(1)-(5-phospho-D-ribosyl)glycinamide (formate route): step 1/1. In terms of biological role, involved in the de novo purine biosynthesis. Catalyzes the transfer of formate to 5-phospho-ribosyl-glycinamide (GAR), producing 5-phospho-ribosyl-N-formylglycinamide (FGAR). Formate is provided by PurU via hydrolysis of 10-formyl-tetrahydrofolate. This Nitratidesulfovibrio vulgaris (strain ATCC 29579 / DSM 644 / CCUG 34227 / NCIMB 8303 / VKM B-1760 / Hildenborough) (Desulfovibrio vulgaris) protein is Formate-dependent phosphoribosylglycinamide formyltransferase.